Reading from the N-terminus, the 104-residue chain is Large ribosomal subunit protein uL24 (104 aa).

It belongs to the universal ribosomal protein uL24 family. In terms of assembly, part of the 50S ribosomal subunit.

Its function is as follows. One of two assembly initiator proteins, it binds directly to the 5'-end of the 23S rRNA, where it nucleates assembly of the 50S subunit. Functionally, one of the proteins that surrounds the polypeptide exit tunnel on the outside of the subunit. The protein is Large ribosomal subunit protein uL24 of Saccharopolyspora erythraea (strain ATCC 11635 / DSM 40517 / JCM 4748 / NBRC 13426 / NCIMB 8594 / NRRL 2338).